The primary structure comprises 110 residues: UPF0060 membrane protein AHA_2410 (110 aa).

4 helical membrane passes run 8–28 (GLFL…YLWL), 33–53 (SVWL…LLSL), 63–83 (AAYG…VDGI), and 87–107 (LWDL…MFAP).

This sequence belongs to the UPF0060 family.

Its subcellular location is the cell inner membrane. This is UPF0060 membrane protein AHA_2410 from Aeromonas hydrophila subsp. hydrophila (strain ATCC 7966 / DSM 30187 / BCRC 13018 / CCUG 14551 / JCM 1027 / KCTC 2358 / NCIMB 9240 / NCTC 8049).